The primary structure comprises 215 residues: MARVFPQAAISSPYMSTERETFTVWMKSLVYQTNGLTVYNSNGEITYRVENYDKCSNEVHIMDLHGNILFTIRKKKLWLFGSWYVYRECGSFTSTEEVKPCARIKRSSIRDGDWEVRDETNEVFWILRFDPKFAFQIIDIHGNIIAQVKPKQSSNGITLGEDVLTLEVKPRVDHSLVVTLVTVYGLIKGIDGEVKQLRDFEEEEVAVGDEIAIEI.

Belongs to the LOR family.

Functionally, might be related to the phospholipid scramblase and tubby-like superfamily of membrane tethered transcription factors. This is Protein LURP-one-related 4 from Arabidopsis thaliana (Mouse-ear cress).